Reading from the N-terminus, the 166-residue chain is UPF0254 protein Maeo_0668 (166 aa).

This sequence belongs to the UPF0254 family.

The protein is UPF0254 protein Maeo_0668 of Methanococcus aeolicus (strain ATCC BAA-1280 / DSM 17508 / OCM 812 / Nankai-3).